A 629-amino-acid polypeptide reads, in one-letter code: DNA ligase B (629 aa).

The active-site N6-AMP-lysine intermediate is Lys-151. Polar residues predominate over residues 588-597 (LQKQHGTNTR). Residues 588–629 (LQKQHGTNTRNEQKGDVRRVDVKQDNGTTWLPEQDSNLRPND) are disordered. A compositionally biased stretch (basic and acidic residues) spans 598 to 611 (NEQKGDVRRVDVKQ). Positions 612 to 629 (DNGTTWLPEQDSNLRPND) are enriched in polar residues.

This sequence belongs to the NAD-dependent DNA ligase family. LigB subfamily.

The catalysed reaction is NAD(+) + (deoxyribonucleotide)n-3'-hydroxyl + 5'-phospho-(deoxyribonucleotide)m = (deoxyribonucleotide)n+m + AMP + beta-nicotinamide D-nucleotide.. Catalyzes the formation of phosphodiester linkages between 5'-phosphoryl and 3'-hydroxyl groups in double-stranded DNA using NAD as a coenzyme and as the energy source for the reaction. The sequence is that of DNA ligase B from Chromohalobacter salexigens (strain ATCC BAA-138 / DSM 3043 / CIP 106854 / NCIMB 13768 / 1H11).